A 294-amino-acid polypeptide reads, in one-letter code: Protein C3orf33 (294 aa).

A2 is modified (N-acetylalanine). The chain crosses the membrane as a helical span at residues 40 to 56; the sequence is ISTGMAIAGIMLLLRSI.

Highly expressed in ileocecal tissue and endometrium.

It is found in the membrane. Its subcellular location is the secreted. Secreted protein may play a role in transcription regulation via the MAPK3/MAPK1 pathway through an unidentified receptor on the plasma membrane. This chain is Protein C3orf33 (C3orf33), found in Homo sapiens (Human).